We begin with the raw amino-acid sequence, 776 residues long: Intermediate filament protein ifp-1 (776 aa).

Residues 1-23 form a head region; the sequence is MDSANARDCLLHLARAKLSERQD. In terms of domain architecture, IF rod spans 20–371; sequence ERQDLVQLND…ELLDRSGDPR (352 aa). The coil 1A stretch occupies residues 24 to 55; it reads LVQLNDQFVDIIEHVHYMEAEHTALEHDYNLL. The tract at residues 56-69 is linker 1; that stretch reads KSGVQSDSSGINEI. The segment at 70–207 is coil 1B; the sequence is YNVEIRTVRS…EDNKKIIMNE (138 aa). The interval 208 to 224 is linker 12; it reads HKYFVRDRNADRHVFRD. The tract at residues 225 to 620 is coil 2; it reads QLRKAIADIR…QRGPHHSSYH (396 aa). Disordered stretches follow at residues 453–473 and 518–544; these read ASPI…DSRS and NTTQ…SERR. The segment covering 518–536 has biased composition (polar residues); it reads NTTQINNPYASRTPTSSVN. A tail region spans residues 621-768; sequence AATGSVSNSI…WFVYTSNTEI (148 aa). Residues 653 to 764 form the LTD domain; it reads NFQRFTRWYK…EVKSWFVYTS (112 aa).

The protein belongs to the intermediate filament family.

It localises to the cytoplasm. Functionally, cytoplasmic intermediate filaments provide mechanical strength to cells. Not essential protein. In Caenorhabditis elegans, this protein is Intermediate filament protein ifp-1 (ifp-1).